The sequence spans 432 residues: MTTEIMQISLSHNPADARWGEKALISTNDQGVTIHLTSHDQLGGIQRAARKIDGQGIKQVKLAGEGWGLEQSWAFWQGFRGPKGQRSVVWAELPANEKTELEQRLQIIDWVRDTINAPAEDLGPEQLAKNAIDLLCAVSCDAVSYRITKGEDLREQNYAGIYTVGRGSDRAPVLLALDYNPTGNPDAPVMACLVGKGITFDSGGYSLKQSAFMDSMKSDMGGAATLTGALALAAARGLKERVKLYLCCADNMVSGNAFKLGDIIRYRNGKTVEIMNTDAEGRLVLADGLIDASEQNAPLIIDAATLTGAAKTALGNDYHALFSFDDELAQALLNSAHSEHELFWRLPLAEFHRSQLPSNFAELNNVAGGAYSAGASTAAAFLSHFVKNYQQGWLHIDCSATYRKSAVDQWSAGATGLGVRTVANLLLAQAKQ.

Residues Lys196 and Asp201 each contribute to the Mn(2+) site. Residue Lys208 is part of the active site. Positions 219, 278, and 280 each coordinate Mn(2+). Residue Arg282 is part of the active site.

This sequence belongs to the peptidase M17 family. In terms of assembly, homohexamer. Requires Mn(2+) as cofactor.

Its subcellular location is the cytoplasm. It catalyses the reaction Release of an N-terminal amino acid, Xaa, from a peptide or arylamide. Xaa is preferably Glu or Asp but may be other amino acids, including Leu, Met, His, Cys and Gln.. Its function is as follows. Probably plays an important role in intracellular peptide degradation. This is Peptidase B from Yersinia pseudotuberculosis serotype IB (strain PB1/+).